The chain runs to 364 residues: Probable dual-specificity RNA methyltransferase RlmN (364 aa).

The active-site Proton acceptor is the Glu107. In terms of domain architecture, Radical SAM core spans 113 to 346; the sequence is HDYGNSVCVT…ATIRREQGSD (234 aa). A disulfide bridge links Cys120 with Cys351. Positions 127, 131, and 134 each coordinate [4Fe-4S] cluster. S-adenosyl-L-methionine is bound by residues 177–178, Ser209, 232–234, and Asn308; these read GE and SLH. The active-site S-methylcysteine intermediate is Cys351.

Belongs to the radical SAM superfamily. RlmN family. It depends on [4Fe-4S] cluster as a cofactor.

It localises to the cytoplasm. It carries out the reaction adenosine(2503) in 23S rRNA + 2 reduced [2Fe-2S]-[ferredoxin] + 2 S-adenosyl-L-methionine = 2-methyladenosine(2503) in 23S rRNA + 5'-deoxyadenosine + L-methionine + 2 oxidized [2Fe-2S]-[ferredoxin] + S-adenosyl-L-homocysteine. The enzyme catalyses adenosine(37) in tRNA + 2 reduced [2Fe-2S]-[ferredoxin] + 2 S-adenosyl-L-methionine = 2-methyladenosine(37) in tRNA + 5'-deoxyadenosine + L-methionine + 2 oxidized [2Fe-2S]-[ferredoxin] + S-adenosyl-L-homocysteine. Its function is as follows. Specifically methylates position 2 of adenine 2503 in 23S rRNA and position 2 of adenine 37 in tRNAs. Confers resistance to some classes of antibiotics. This chain is Probable dual-specificity RNA methyltransferase RlmN, found in Staphylococcus aureus (strain Mu3 / ATCC 700698).